A 106-amino-acid chain; its full sequence is Small ribosomal subunit protein uS10 (106 aa).

The protein belongs to the universal ribosomal protein uS10 family. In terms of assembly, part of the 30S ribosomal subunit.

In terms of biological role, involved in the binding of tRNA to the ribosomes. The chain is Small ribosomal subunit protein uS10 from Synechococcus sp. (strain CC9311).